Reading from the N-terminus, the 336-residue chain is MLMTATHREPIVLDTTVRDGSYAVNFQYTDDDVRRIVGDLDAAGIPYIEIGHGVTIGAAAAQGPAAHTDEEYFRAARSVVRNARLGAVIVPALARIETVDLAGDYLDFLRICVIATEFELVMPFVERAQSKGLEVSIQLVKSHLFEPDVLAAAGKRARDVGVRIVYVVDTTGTFLPEDARRYVEALRGASDVSVGFHGHNNLAMAVANTLEAFDAGADFLDGTLMGFGRGAGNCQIECLVAALQRRGHLAAVDLDRIFDAARSDMLGRSPQSYGIDPWEISFGFHGLDSLQVEHLRAAAQQAGLSVSHVIRQTAKSHAGQWLSPQDIDRVVVGMRA.

The 249-residue stretch at 10 to 258 (PIVLDTTVRD…LAAVDLDRIF (249 aa)) folds into the Pyruvate carboxyltransferase domain. Mn(2+) contacts are provided by Asp-19, His-197, and His-199.

It belongs to the 4-hydroxy-2-oxovalerate aldolase family. As to quaternary structure, homodimer. A divalent metal cation is required as a cofactor.

It carries out the reaction oxaloacetate + H(+) = pyruvate + CO2. Its activity is regulated as follows. Activity is abolished upon incubation with Chelex and EDTA. Functionally, exhibits oxaloacetate decarboxylase activity. Lacks any detectable aldolase activity with 4-hydroxy-2-oxopentanoate (HOPA), 4-hydroxy-2-oxohexanoate (HOHA) or other 4-hydroxy-2-oxoacids. In Mycobacterium tuberculosis (strain ATCC 25618 / H37Rv), this protein is Oxaloacetate decarboxylase.